Consider the following 485-residue polypeptide: MITRETLKSLPANVQAPPYDIDGIKPGIVHFGVGNFFRAHEAFYVEQILEHAPDWAIVGVGLTGSDRSKKKAEEFKAQDCLYSLTETAPSGKSTVRVMGALRDYLLAPADPEAVLKHLVDPAIRIVSMTITEGGYNINETTGAFDLENAAVKADLQNPEKPSTVFGYVVEALRRRRDAGGKAFTVMSCDNLRHNGNVARKAFLGYAKARDPELAKWIEENATFPNGMVDRITPTVSAEIAKKLNAASGLDDDLPLVAEDFHQWVLEDRFANGRPPLEKAGVQLVDDVTDWEHVKIRMLNAGHITLCFPGILVGYENVDDAIEDKDLRGNLENYLNKDVIPTLKAPPGMTLEGYRDSVISRFSNKAMSDQTLRIASDGCSKIQVFWTETVRRAIECKRDLSRIAFGIASYLEMLRGRDEKGGTYESSEPTYGEAQKKLAKADDFESALKLPAFDGWRDLDTSELDQKVIALRKVIREKGVKAAIPA.

This sequence belongs to the mannitol dehydrogenase family.

It is found in the cytoplasm. In Gluconobacter oxydans (strain 621H) (Gluconobacter suboxydans), this protein is Polyol:NADP oxidoreductase (por).